The sequence spans 194 residues: 3-isopropylmalate dehydratase small subunit (194 aa).

This sequence belongs to the LeuD family. LeuD type 1 subfamily. As to quaternary structure, heterodimer of LeuC and LeuD.

It catalyses the reaction (2R,3S)-3-isopropylmalate = (2S)-2-isopropylmalate. Its pathway is amino-acid biosynthesis; L-leucine biosynthesis; L-leucine from 3-methyl-2-oxobutanoate: step 2/4. Catalyzes the isomerization between 2-isopropylmalate and 3-isopropylmalate, via the formation of 2-isopropylmaleate. This is 3-isopropylmalate dehydratase small subunit from Limosilactobacillus fermentum (strain NBRC 3956 / LMG 18251) (Lactobacillus fermentum).